The following is a 220-amino-acid chain: Guanylate kinase (220 aa).

Residues 11 to 190 (GVLFVLSSPS…CYGEVMAILR (180 aa)) form the Guanylate kinase-like domain. Residue 18-25 (SPSGAGKT) coordinates ATP.

The protein belongs to the guanylate kinase family.

It localises to the cytoplasm. It carries out the reaction GMP + ATP = GDP + ADP. In terms of biological role, essential for recycling GMP and indirectly, cGMP. In Sphingopyxis alaskensis (strain DSM 13593 / LMG 18877 / RB2256) (Sphingomonas alaskensis), this protein is Guanylate kinase.